The sequence spans 437 residues: ATP-dependent RNA helicase RhlB (437 aa).

The Q motif signature appears at 9–37 (QKFADLGLKPQVTEGLEKKGFEYCTPIQA). The 180-residue stretch at 40-219 (LPVLLTGQDI…FEHMHNPEHV (180 aa)) folds into the Helicase ATP-binding domain. 53 to 60 (AQTGTGKT) serves as a coordination point for ATP. The DEAD box signature appears at 165 to 168 (DEAD). In terms of domain architecture, Helicase C-terminal spans 245–390 (ALLQTLIEEE…VSDYDASALI (146 aa)). The disordered stretch occupies residues 395-437 (APLRMRAPRTQQRRTNTGGTRSGNRKPQGRRPRQPRQSAPKQS). A compositionally biased stretch (low complexity) spans 403-413 (RTQQRRTNTGG). The span at 417–428 (GNRKPQGRRPRQ) shows a compositional bias: basic residues.

This sequence belongs to the DEAD box helicase family. RhlB subfamily. As to quaternary structure, component of the RNA degradosome, which is a multiprotein complex involved in RNA processing and mRNA degradation.

The protein resides in the cytoplasm. It catalyses the reaction ATP + H2O = ADP + phosphate + H(+). Functionally, DEAD-box RNA helicase involved in RNA degradation. Has RNA-dependent ATPase activity and unwinds double-stranded RNA. The chain is ATP-dependent RNA helicase RhlB from Vibrio campbellii (strain ATCC BAA-1116).